Here is a 1083-residue protein sequence, read N- to C-terminus: Centrosomal protein of 131 kDa (1083 aa).

2 disordered regions span residues 1-155 (MKGT…AGPR) and 220-258 (GSESSGFGKLPKNVSSATHSARNNTGGSTGLPRRKEVTE). The tract at residues 1-250 (MKGTRAIGSV…RNNTGGSTGL (250 aa)) is interaction with PLK4. Phosphoserine is present on residues Ser-14 and Ser-35. At Ser-47 the chain carries Phosphoserine; by MAPKAPK2. Residues 68–87 (QAINNLRRSNSTTQVSQPRS) are compositionally biased toward polar residues. A Phosphoserine; by MAPKAPK2 and PLK4 modification is found at Ser-78. Phosphoserine occurs at positions 89, 105, 114, 146, and 150. Residues 138–148 (LPSNARSSSAL) show a composition bias toward polar residues. A compositionally biased stretch (polar residues) spans 232–245 (NVSSATHSARNNTG). Residues 269–289 (NQATVTIQRWYRHQVQRRGAG) enclose the IQ domain. Positions 301–429 (REEQRQRSGE…PQQPPEDRTQ (129 aa)) are disordered. 2 stretches are compositionally biased toward basic and acidic residues: residues 317-333 (HQQKEAARRKAREEKAR) and 360-369 (GPPENPRETR). A Phosphoserine modification is found at Ser-381. Thr-383 is modified (phosphothreonine). Residues Ser-453, Ser-489, Asp-496, Ser-499, Ser-731, and Ser-798 each carry the phosphoserine modification. Residues 1047–1076 (KEEAVSSLRTQHEAAVKRADHLEELLEQHR) are compositionally biased toward basic and acidic residues. Residues 1047–1083 (KEEAVSSLRTQHEAAVKRADHLEELLEQHRRPTPSTK) are disordered.

Belongs to the CEP131 family. As to quaternary structure, self-associates. Associates with the centriolar satellite BBSome protein complex. Interacts with BBS4; the interaction limits BBS4 availability for association with the BBSome complex, and hence negatively regulates ciliary localization of the BBSome complex. Interacts with MIB1. Interacts with PCM1; the interaction increases in response to ultraviolet light (UV) radiation. Associates with microtubules; association with microtubules is reduced in response to cellular stress, such as UV stimulation, in a process that requires p38 MAP kinase signaling. Interacts with CEP290, DCTN1, PCNT, PCM1 and CEP152. Interacts with 14-3-3 proteins following UV-induced phosphorylation by MAPKAPK2; this inhibits formation of novel centriolar satellites. Interacts with SDCCAG8. Interacts with CCDC61. Interacts with PLK4. Post-translationally, ubiquitinated. Undergoes monoubiquitination catalyzed by the E3 ubiquitin-protein ligase MIB1 in proliferating cells, preventing cilia formation. Monoubiquitination by MIB1 is inhibited in response to cellular stress, such as ultraviolet light (UV) radiation or heat shock, resulting in cilia formation initiation. In terms of processing, MAPKAPK2-dependent phosphorylation at Ser-47 and Ser-78 occurs in response to cellular stress such as exposure to ultraviolet irradiation and promotes binding to 14-3-3 proteins which leads to cytoplasmic sequestration of CEP131 and blocks formation of new centriolar satellites. Phosphorylation at Ser-78 mediated by PLK4 is essential for proper organization and integrity of centriolar satellites but is dispensable for its localization to centrioles and its function in ciliogenesis.

Its subcellular location is the cytoplasm. The protein localises to the cytoskeleton. The protein resides in the microtubule organizing center. It localises to the centrosome. It is found in the centriolar satellite. Its subcellular location is the centriole. The protein localises to the cilium basal body. The protein resides in the cytoplasmic vesicle. It localises to the secretory vesicle. It is found in the acrosome. Its function is as follows. Component of centriolar satellites contributing to the building of a complex and dynamic network required to regulate cilia/flagellum formation. In proliferating cells, MIB1-mediated ubiquitination induces its sequestration within centriolar satellites, precluding untimely cilia formation initiation. In contrast, during normal and ultraviolet or heat shock cellular stress-induced ciliogenesis, its non-ubiquitinated form is rapidly displaced from centriolar satellites and recruited to centrosome/basal bodies in a microtubule- and p38 MAPK-dependent manner. Also acts as a negative regulator of BBSome ciliary trafficking. Plays a role in sperm flagellar formation; may be involved in the regulation of intraflagellar transport (IFT) and/or intramanchette (IMT) trafficking, which are important for axoneme extension and/or cargo delivery to the nascent sperm tail. Required for optimal cell proliferation and cell cycle progression; may play a role in the regulation of genome stability in non-ciliogenic cells. Involved in centriole duplication. Required for CEP152, WDR62 and CEP63 centrosomal localization and promotes the centrosomal localization of CDK2. Essential for maintaining proper centriolar satellite integrity. The protein is Centrosomal protein of 131 kDa (CEP131) of Homo sapiens (Human).